The primary structure comprises 277 residues: NH(3)-dependent NAD(+) synthetase (277 aa).

An ATP-binding site is contributed by 47 to 54 (GISGGQDS). Residue D53 participates in Mg(2+) binding. Deamido-NAD(+) is bound at residue R141. T161 contacts ATP. E166 contacts Mg(2+). K174 and D181 together coordinate deamido-NAD(+). Residues K190 and T212 each contribute to the ATP site. Residue 261-262 (HK) participates in deamido-NAD(+) binding.

This sequence belongs to the NAD synthetase family. In terms of assembly, homodimer.

The catalysed reaction is deamido-NAD(+) + NH4(+) + ATP = AMP + diphosphate + NAD(+) + H(+). It participates in cofactor biosynthesis; NAD(+) biosynthesis; NAD(+) from deamido-NAD(+) (ammonia route): step 1/1. Catalyzes the ATP-dependent amidation of deamido-NAD to form NAD. Uses ammonia as a nitrogen source. The polypeptide is NH(3)-dependent NAD(+) synthetase (Lactobacillus johnsonii (strain CNCM I-12250 / La1 / NCC 533)).